Reading from the N-terminus, the 144-residue chain is Large ribosomal subunit protein uL13 (144 aa).

This sequence belongs to the universal ribosomal protein uL13 family. As to quaternary structure, part of the 50S ribosomal subunit.

Its function is as follows. This protein is one of the early assembly proteins of the 50S ribosomal subunit, although it is not seen to bind rRNA by itself. It is important during the early stages of 50S assembly. This Mesomycoplasma hyopneumoniae (strain 7448) (Mycoplasma hyopneumoniae) protein is Large ribosomal subunit protein uL13.